The primary structure comprises 41 residues: Conotoxin Bu22 (41 aa).

Residues 1 to 25 (SDRASDGRNAAANDRASDLVALTVR) constitute a propeptide that is removed on maturation. 2 disulfides stabilise this stretch: C27–C33 and C28–C40.

The protein belongs to the conotoxin A superfamily. Expressed by the venom duct.

It is found in the secreted. The polypeptide is Conotoxin Bu22 (Conus bullatus (Bubble cone)).